A 121-amino-acid chain; its full sequence is Large ribosomal subunit protein bL12 (121 aa).

It belongs to the bacterial ribosomal protein bL12 family. As to quaternary structure, homodimer. Part of the ribosomal stalk of the 50S ribosomal subunit. Forms a multimeric L10(L12)X complex, where L10 forms an elongated spine to which 2 to 4 L12 dimers bind in a sequential fashion. Binds GTP-bound translation factors.

In terms of biological role, forms part of the ribosomal stalk which helps the ribosome interact with GTP-bound translation factors. Is thus essential for accurate translation. This Pelagibacter ubique (strain HTCC1062) protein is Large ribosomal subunit protein bL12.